The following is a 29-amino-acid chain: Mycofactocin precursor peptide (29 aa).

It belongs to the mycofactocin precursor peptide family. In terms of processing, the post-translational modifications that lead to mycofactocin involve oxidative decarboxylation of the C-terminal tyrosine residue catalyzed by MftC, introduction of a tyramine-valine cross-link, removal of the modified C-terminal dipeptide by MftE. The released dipeptide then undergoes oxidative deamination by MftD, glycosylation by MftF and methylation by an unknown enzyme.

Functionally, precursor peptide that leads to mycofactocin (MFT) after extensive post-translational modifications by enzymes encoded by adjacent genes. Mycofactocin acts as a redox cofactor of nicotinamide-dependent oxidoreductases encoded in the same locus. This Mycobacterium tuberculosis (strain ATCC 25618 / H37Rv) protein is Mycofactocin precursor peptide.